Consider the following 222-residue polypeptide: MKAAVLVFPGSNCDRDLAVGFRSAGFEVEMVWHKETALPAGIDVVGIPGGFSYGDYLRCGAIAAQSPIMRAVADFAGQGGHVLGVCNGFQVLCETRLLPGVLMRNGGIKFVCRAEPLVVASATSPFTDGYSIGDRIAVPVAHHDGNYQIDDEGLSALRSEDRIAFTYADNPNGSRADIAGVLSANRRVLGMMPHPERAVDVAHGGTDGSVLFASLAAALVAA.

The Glutamine amidotransferase type-1 domain maps to 3–222; the sequence is AAVLVFPGSN…ASLAAALVAA (220 aa). Catalysis depends on cysteine 86, which acts as the Nucleophile. Catalysis depends on residues histidine 194 and glutamate 196.

As to quaternary structure, part of the FGAM synthase complex composed of 1 PurL, 1 PurQ and 2 PurS subunits.

The protein resides in the cytoplasm. It carries out the reaction N(2)-formyl-N(1)-(5-phospho-beta-D-ribosyl)glycinamide + L-glutamine + ATP + H2O = 2-formamido-N(1)-(5-O-phospho-beta-D-ribosyl)acetamidine + L-glutamate + ADP + phosphate + H(+). The catalysed reaction is L-glutamine + H2O = L-glutamate + NH4(+). It functions in the pathway purine metabolism; IMP biosynthesis via de novo pathway; 5-amino-1-(5-phospho-D-ribosyl)imidazole from N(2)-formyl-N(1)-(5-phospho-D-ribosyl)glycinamide: step 1/2. Part of the phosphoribosylformylglycinamidine synthase complex involved in the purines biosynthetic pathway. Catalyzes the ATP-dependent conversion of formylglycinamide ribonucleotide (FGAR) and glutamine to yield formylglycinamidine ribonucleotide (FGAM) and glutamate. The FGAM synthase complex is composed of three subunits. PurQ produces an ammonia molecule by converting glutamine to glutamate. PurL transfers the ammonia molecule to FGAR to form FGAM in an ATP-dependent manner. PurS interacts with PurQ and PurL and is thought to assist in the transfer of the ammonia molecule from PurQ to PurL. This Jannaschia sp. (strain CCS1) protein is Phosphoribosylformylglycinamidine synthase subunit PurQ.